Here is a 1265-residue protein sequence, read N- to C-terminus: Topoisomerase 1-associated factor 1 (1265 aa).

Positions 650–659 (DVNGNKNGQD) are enriched in polar residues. 3 disordered regions span residues 650 to 670 (DVNG…DAIS), 1019 to 1052 (GKQI…DDDT), and 1167 to 1226 (HLSL…DPPS). Positions 1026 to 1039 (TAKKRSAIKPKSRK) are enriched in basic residues. 2 stretches are compositionally biased toward low complexity: residues 1171–1188 (SPNN…LSSD) and 1201–1211 (SDSEYNSSNSS).

This sequence belongs to the timeless family. As to quaternary structure, component of the fork protection complex (FPC) consisting of TOF1 and CSM3.

The protein resides in the nucleus. Functionally, forms a fork protection complex (FPC) with CSM3 and which is required for chromosome segregation during meiosis and DNA damage repair. FPC coordinates leading and lagging strand synthesis and moves with the replication fork. FPC stabilizes replication forks in a configuration that is recognized by replication checkpoint sensors. This is Topoisomerase 1-associated factor 1 (TOF1) from Eremothecium gossypii (strain ATCC 10895 / CBS 109.51 / FGSC 9923 / NRRL Y-1056) (Yeast).